Here is a 491-residue protein sequence, read N- to C-terminus: UDP-N-acetylmuramate--L-alanine ligase (491 aa).

ATP is bound at residue 126–132 (GTHGKTT).

Belongs to the MurCDEF family.

It localises to the cytoplasm. It catalyses the reaction UDP-N-acetyl-alpha-D-muramate + L-alanine + ATP = UDP-N-acetyl-alpha-D-muramoyl-L-alanine + ADP + phosphate + H(+). It functions in the pathway cell wall biogenesis; peptidoglycan biosynthesis. Functionally, cell wall formation. The sequence is that of UDP-N-acetylmuramate--L-alanine ligase from Escherichia coli O7:K1 (strain IAI39 / ExPEC).